The chain runs to 330 residues: MTTSLLLHPRWPESLMYVYEDSAAESGIGGGGGGGGGGTGGAGGGCSGASPGKAPSMDGLGSSCPASHCRDLLPHPVLGRPPAPLGAPQGAVYTDIPAPEAARQCAPPPAPPTSSSATLGYGYPFGGSYYGCRLSHNVNLQQKPCAYHPGDKYPEPSGALPGDDLSSRAKEFAFYPSFASSYQAMPGYLDVSVVPGISGHPEPRHDALIPVEGYQHWALSNGWDSQVYCSKEQSQSAHLWKSPFPDVVPLQPEVSSYRRGRKKRVPYTKVQLKELEKEYAASKFITKEKRRRISATTNLSERQVTIWFQNRRVKEKKVVSKSKAPHLHST.

The span at 30-47 (GGGGGGGGGTGGAGGGCS) shows a compositional bias: gly residues. Residues 30-50 (GGGGGGGGGTGGAGGGCSGAS) are disordered. Positions 260–319 (GRKKRVPYTKVQLKELEKEYAASKFITKEKRRRISATTNLSERQVTIWFQNRRVKEKKVV) form a DNA-binding region, homeobox.

This sequence belongs to the Abd-B homeobox family.

The protein localises to the nucleus. In terms of biological role, transcription factor which plays a role in hair follicle differentiation. Regulates FOXQ1 expression and that of other hair-specific genes. The polypeptide is Homeobox protein Hox-C13 (HOXC13) (Homo sapiens (Human)).